A 217-amino-acid chain; its full sequence is Small ribosomal subunit protein uS3 (217 aa).

In terms of domain architecture, KH type-2 spans 38–106 (IRNFIKKELA…QVHINIIEIK (69 aa)).

It belongs to the universal ribosomal protein uS3 family. Part of the 30S ribosomal subunit. Forms a tight complex with proteins S10 and S14.

Functionally, binds the lower part of the 30S subunit head. Binds mRNA in the 70S ribosome, positioning it for translation. The protein is Small ribosomal subunit protein uS3 of Streptococcus suis (strain 98HAH33).